The chain runs to 358 residues: C-X-C chemokine receptor type 4-B (358 aa).

The tract at residues Met-1–Phe-25 is important for chemokine binding and signaling. At Met-1–Phe-44 the chain is on the extracellular side. Asn-16 and Asn-20 each carry an N-linked (GlcNAc...) asparagine glycan. 2 cysteine pairs are disulfide-bonded: Cys-32-Cys-281 and Cys-113-Cys-190. Residues Leu-45–Met-67 traverse the membrane as a helical segment. Residues Gly-68–Arg-81 lie on the Cytoplasmic side of the membrane. Residues Leu-82–Ala-103 form a helical membrane-spanning segment. Residues Trp-98–Asp-101 are chemokine binding. Topologically, residues Ile-104–Lys-114 are extracellular. A helical membrane pass occupies residues Ala-115–Ile-134. The chemokine binding stretch occupies residues His-117 to Thr-121. The Cytoplasmic portion of the chain corresponds to Ser-135–Lys-158. The tract at residues Tyr-139–Ser-151 is involved in dimerization; when bound to chemokine. A helical membrane pass occupies residues Val-159 to Phe-178. The Extracellular portion of the chain corresponds to Ala-179–Trp-202. Residues Cys-190–Tyr-194 are chemokine binding, important for signaling. Residues Thr-203–Leu-223 form a helical membrane-spanning segment. The Cytoplasmic segment spans residues Val-224 to Thr-248. Residues Val-249 to Thr-268 traverse the membrane as a helical segment. At Asp-269–Lys-289 the chain is on the extracellular side. The chain crosses the membrane as a helical span at residues Ala-290–Tyr-309. Over Ala-310–Ser-358 the chain is Cytoplasmic. The tract at residues Lys-338–Ser-358 is disordered. Over residues Ser-344–Ser-358 the composition is skewed to low complexity.

Belongs to the G-protein coupled receptor 1 family. In terms of assembly, monomer. Can form dimers. In terms of processing, sulfation is required for efficient binding of cxcl12/sdf-1alpha and promotes its dimerization. Post-translationally, O- and N-glycosylated.

The protein localises to the cell membrane. Its subcellular location is the cytoplasm. It is found in the nucleus. It localises to the early endosome. The protein resides in the late endosome. The protein localises to the lysosome. Receptor for the C-X-C chemokine cxcl12/sdf-1. Transduces a signal by increasing the intracellular level of calcium ions. Signaling with cxcl12/sdf-1 mediates the directional movement of mesodermal cells during gastrulation. May play a role in the migration of embryonic presumptive primordial germ cells (pPGCs). May also be involved in regulating migration of hematopoietic stem cells into the larval liver. The protein is C-X-C chemokine receptor type 4-B (cxcr4-b) of Xenopus laevis (African clawed frog).